Reading from the N-terminus, the 313-residue chain is Homoserine O-acetyltransferase (313 aa).

The Acyl-thioester intermediate role is filled by cysteine 142. Substrate-binding residues include lysine 163 and serine 191. Histidine 234 acts as the Proton acceptor in catalysis. Residue glutamate 236 is part of the active site. Arginine 248 provides a ligand contact to substrate.

It belongs to the MetA family.

It is found in the cytoplasm. The catalysed reaction is L-homoserine + acetyl-CoA = O-acetyl-L-homoserine + CoA. The protein operates within amino-acid biosynthesis; L-methionine biosynthesis via de novo pathway; O-acetyl-L-homoserine from L-homoserine: step 1/1. Transfers an acetyl group from acetyl-CoA to L-homoserine, forming acetyl-L-homoserine. The polypeptide is Homoserine O-acetyltransferase (Streptococcus sanguinis (strain SK36)).